The chain runs to 262 residues: Nurim (262 aa).

The Nuclear segment spans residues 1–4 (MAPA). The helical transmembrane segment at 5-28 (LLLVPAALASFVLAFGTGVEFVRF) threads the bilayer. Residues 29–58 (TSLRPLLGGIPESGGPDARHGWLAALQDRS) are Perinuclear space-facing. The chain crosses the membrane as a helical span at residues 59 to 80 (ILASLAWDLCLLLLFVVQHSLM). At 81 to 97 (ATEAVKAWTSRYFGVLQ) the chain is on the nuclear side. The chain crosses the membrane as a helical span at residues 98 to 114 (RSLYVACTALALQLVMR). At 115–133 (YWEATPRGPVLWEARAEPW) the chain is on the perinuclear space side. A helical transmembrane segment spans residues 134 to 164 (ATWVPLLCFVLHVVSWLLIFSILLVFDYAEL). Residues 165–191 (MGLKQVYYHVLGLGEPLSLKSPRALRL) lie on the Nuclear side of the membrane. Residues 192–210 (FSHLRHPVCVELLTVLWVV) traverse the membrane as a helical segment. Residues 211–216 (PTLGTD) are Perinuclear space-facing. A helical transmembrane segment spans residues 217–234 (RLLLALLFTLYLGLAHGL). Residues 235 to 262 (DQQDLRYLRSQLQRKLQLLSRPQDGEAE) are Nuclear-facing.

This sequence belongs to the nurim family.

The protein resides in the nucleus inner membrane. The chain is Nurim (Nrm) from Rattus norvegicus (Rat).